The sequence spans 75 residues: RNA-binding protein KhpA (75 aa).

A KH domain is found at 29 to 75 (SIILELKVAPEDMGKVIGKQGRIAKAIRTVIKAAAVKENKRVVVEII).

Belongs to the KhpA RNA-binding protein family. In terms of assembly, forms a complex with KhpB.

The protein localises to the cytoplasm. A probable RNA chaperone. Forms a complex with KhpB which binds to cellular RNA and controls its expression. Plays a role in peptidoglycan (PG) homeostasis and cell length regulation. The chain is RNA-binding protein KhpA from Clostridium acetobutylicum (strain ATCC 824 / DSM 792 / JCM 1419 / IAM 19013 / LMG 5710 / NBRC 13948 / NRRL B-527 / VKM B-1787 / 2291 / W).